A 266-amino-acid chain; its full sequence is GATA-type zinc finger protein 1 (266 aa).

Disordered stretches follow at residues 1–31 (MEAA…KSRP), 106–129 (TQCP…PRKQ), and 171–191 (CSQK…SSEA). Residues 106–121 (TQCPNLEISSATSPAS) show a composition bias toward polar residues. The segment at 197-221 (CASCRTQRTPLWRDAEDGTPLCNAC) adopts a GATA-type zinc-finger fold.

In terms of tissue distribution, specifically expressed in adult testis and ovary. Expressed at high levels in the somatic cells of the developing gonads, including Leydig cells in the testes and granulosa cells in the ovaries.

It is found in the nucleus. In terms of biological role, transcriptional regulator that plays a key role in germ cell development. Determines the oogenic fate by activating key genes for the oogenic program and meiotic prophase entry. Acts downstream of bone morphogenetic protein (BMP) by regulating expression of genes required for the oogenic programs, which are repressed by Polycomb activities in sexually uncommitted germ cells. Regulates expression of STRA8, a central downstream effector for the meiotic program. Acts independently of retinoic acid (RA). In males, not required for germ-cell sex determination, but required to allow the spermatogonia to efficiently accomplish the meiotic prophase. The protein is GATA-type zinc finger protein 1 of Mus musculus (Mouse).